A 438-amino-acid polypeptide reads, in one-letter code: Probable imidazolonepropionase (438 aa).

4-imidazolone-5-propanoate contacts are provided by Tyr-159 and His-192. Residue Tyr-159 coordinates N-formimidoyl-L-glutamate. Position 260 (His-260) interacts with Fe(3+). His-260 is a binding site for Zn(2+). Residue Glu-263 coordinates 4-imidazolone-5-propanoate. Fe(3+) is bound at residue Asp-334. Asp-334 contributes to the Zn(2+) binding site. N-formimidoyl-L-glutamate is bound at residue Asn-336.

This sequence belongs to the metallo-dependent hydrolases superfamily. HutI family. Zn(2+) is required as a cofactor. Fe(3+) serves as cofactor.

It carries out the reaction 4-imidazolone-5-propanoate + H2O = N-formimidoyl-L-glutamate. The protein operates within amino-acid degradation; L-histidine degradation into L-glutamate; N-formimidoyl-L-glutamate from L-histidine: step 3/3. The chain is Probable imidazolonepropionase (amdhd1) from Xenopus laevis (African clawed frog).